The sequence spans 454 residues: Tubulin alpha chain (454 aa).

Residues Gln-12, Asp-72, Ser-141, Gly-145, Thr-146, Thr-180, Asn-207, and Asn-229 each contribute to the GTP site. Asp-72 is a Mg(2+) binding site. Glu-255 is a catalytic residue.

This sequence belongs to the tubulin family. Dimer of alpha and beta chains. A typical microtubule is a hollow water-filled tube with an outer diameter of 25 nm and an inner diameter of 15 nM. Alpha-beta heterodimers associate head-to-tail to form protofilaments running lengthwise along the microtubule wall with the beta-tubulin subunit facing the microtubule plus end conferring a structural polarity. Microtubules usually have 13 protofilaments but different protofilament numbers can be found in some organisms and specialized cells. Mg(2+) serves as cofactor.

The protein resides in the cytoplasm. It is found in the cytoskeleton. The enzyme catalyses GTP + H2O = GDP + phosphate + H(+). Functionally, tubulin is the major constituent of microtubules, a cylinder consisting of laterally associated linear protofilaments composed of alpha- and beta-tubulin heterodimers. Microtubules grow by the addition of GTP-tubulin dimers to the microtubule end, where a stabilizing cap forms. Below the cap, tubulin dimers are in GDP-bound state, owing to GTPase activity of alpha-tubulin. The chain is Tubulin alpha chain (TUB1) from Colletotrichum orbiculare (strain 104-T / ATCC 96160 / CBS 514.97 / LARS 414 / MAFF 240422) (Cucumber anthracnose fungus).